Consider the following 238-residue polypeptide: Cysteine-rich venom protein natrin-2 (238 aa).

Positions 1-19 are cleaved as a signal peptide; sequence MIAFIVLLSLAAVLQQSSG. Residues 38–164 enclose the SCP domain; that stretch reads VDKHNALRRS…SSKYLYVCQY (127 aa). Disulfide bonds link Cys-75–Cys-153, Cys-92–Cys-165, Cys-148–Cys-162, Cys-184–Cys-191, Cys-187–Cys-196, Cys-200–Cys-233, Cys-209–Cys-227, and Cys-218–Cys-231. Residues 200 to 233 enclose the ShKT domain; the sequence is CKHHNVFSNCQSLAKQNACQTEWMKSKCAASCFC.

As to expression, expressed by the venom gland.

Its subcellular location is the secreted. In terms of biological role, inhibits carbachol-induced muscle contraction and weakly blocks muscle contraction evoked by potassium. The chain is Cysteine-rich venom protein natrin-2 from Naja atra (Chinese cobra).